Reading from the N-terminus, the 608-residue chain is Fatty acid amide hydrolase (608 aa).

Active-site charge relay system residues include lysine 206 and serine 282. A substrate-binding site is contributed by 303-306; sequence GGGS. Catalysis depends on serine 306, which acts as the Acyl-ester intermediate.

It belongs to the amidase family. In terms of assembly, forms homodimers.

The protein resides in the endoplasmic reticulum membrane. The protein localises to the cell membrane. It catalyses the reaction N-(9Z,12Z-octadecadienoyl)-ethanolamine + H2O = ethanolamine + (9Z,12Z)-octadecadienoate. It carries out the reaction N-hexadecanoylethanolamine + H2O = ethanolamine + hexadecanoate. The enzyme catalyses N-dodecanoylethanolamine + H2O = dodecanoate + ethanolamine. With respect to regulation, inhibited by methyl arachidonyl fluorophosphonate (MAFP). Its function is as follows. Catalyzes the hydrolysis of bioactive endogenous fatty acid amides to their corresponding acids. The hydrolysis of endogenous amidated lipids terminates their participation as lipid mediators in various signaling systems. Converts a wide range of N-acylethanolamines (NAEs) to their corresponding free fatty acids and ethanolamine. This chain is Fatty acid amide hydrolase, found in Oryza sativa subsp. indica (Rice).